The primary structure comprises 117 residues: G antigen 1 (117 aa).

The disordered stretch occupies residues 1–117 (MSWRGRSTYY…PEEGEGQSQC (117 aa)). Acidic residues-rich tracts occupy residues 32 to 45 (FSDE…EEGE) and 87 to 96 (ECEDGPDGQE).

The protein belongs to the GAGE family. In terms of tissue distribution, expressed in a variety of tumor tissues but not in normal tissues, except testis.

Functionally, antigen, recognized on melanoma by autologous cytolytic T-lymphocytes. The polypeptide is G antigen 1 (Homo sapiens (Human)).